Consider the following 344-residue polypeptide: tRNA N6-adenosine threonylcarbamoyltransferase (344 aa).

His111 and His115 together coordinate Fe cation. Residues 136–140, Asp169, Gly182, and Asn279 contribute to the substrate site; that span reads LVSGG. Residue Asp307 participates in Fe cation binding.

It belongs to the KAE1 / TsaD family. It depends on Fe(2+) as a cofactor.

It is found in the cytoplasm. It carries out the reaction L-threonylcarbamoyladenylate + adenosine(37) in tRNA = N(6)-L-threonylcarbamoyladenosine(37) in tRNA + AMP + H(+). Its function is as follows. Required for the formation of a threonylcarbamoyl group on adenosine at position 37 (t(6)A37) in tRNAs that read codons beginning with adenine. Is involved in the transfer of the threonylcarbamoyl moiety of threonylcarbamoyl-AMP (TC-AMP) to the N6 group of A37, together with TsaE and TsaB. TsaD likely plays a direct catalytic role in this reaction. This chain is tRNA N6-adenosine threonylcarbamoyltransferase, found in Mannheimia succiniciproducens (strain KCTC 0769BP / MBEL55E).